A 75-amino-acid polypeptide reads, in one-letter code: Large ribosomal subunit protein uL24c (75 aa).

The protein belongs to the universal ribosomal protein uL24 family. In terms of assembly, part of the 50S ribosomal subunit.

The protein resides in the plastid. It localises to the chloroplast. Functionally, one of two assembly initiator proteins, it binds directly to the 5'-end of the 23S rRNA, where it nucleates assembly of the 50S subunit. This Cyanidioschyzon merolae (strain NIES-3377 / 10D) (Unicellular red alga) protein is Large ribosomal subunit protein uL24c (rpl24).